A 368-amino-acid chain; its full sequence is Dual-specificity RNA methyltransferase RlmN (368 aa).

Glu-94 functions as the Proton acceptor in the catalytic mechanism. In terms of domain architecture, Radical SAM core spans 100–334 (EEDRATLCVS…VIVRKTRGDD (235 aa)). Residues Cys-107 and Cys-339 are joined by a disulfide bond. The [4Fe-4S] cluster site is built by Cys-114, Cys-118, and Cys-121. Residues 163 to 164 (GE), Ser-195, 217 to 219 (SLH), and Asn-296 each bind S-adenosyl-L-methionine. The active-site S-methylcysteine intermediate is Cys-339.

The protein belongs to the radical SAM superfamily. RlmN family. The cofactor is [4Fe-4S] cluster.

Its subcellular location is the cytoplasm. It carries out the reaction adenosine(2503) in 23S rRNA + 2 reduced [2Fe-2S]-[ferredoxin] + 2 S-adenosyl-L-methionine = 2-methyladenosine(2503) in 23S rRNA + 5'-deoxyadenosine + L-methionine + 2 oxidized [2Fe-2S]-[ferredoxin] + S-adenosyl-L-homocysteine. The catalysed reaction is adenosine(37) in tRNA + 2 reduced [2Fe-2S]-[ferredoxin] + 2 S-adenosyl-L-methionine = 2-methyladenosine(37) in tRNA + 5'-deoxyadenosine + L-methionine + 2 oxidized [2Fe-2S]-[ferredoxin] + S-adenosyl-L-homocysteine. Specifically methylates position 2 of adenine 2503 in 23S rRNA and position 2 of adenine 37 in tRNAs. m2A2503 modification seems to play a crucial role in the proofreading step occurring at the peptidyl transferase center and thus would serve to optimize ribosomal fidelity. This chain is Dual-specificity RNA methyltransferase RlmN, found in Aeromonas salmonicida (strain A449).